Consider the following 190-residue polypeptide: ATP synthase subunit C lysine N-methyltransferase (190 aa).

Belongs to the ANT/ATPSC lysine N-methyltransferase family.

Its subcellular location is the mitochondrion. It catalyses the reaction L-lysyl-[protein] + 3 S-adenosyl-L-methionine = N(6),N(6),N(6)-trimethyl-L-lysyl-[protein] + 3 S-adenosyl-L-homocysteine + 3 H(+). Functionally, mitochondrial protein-lysine N-methyltransferase that trimethylates ATP synthase subunit C. Trimethylation is required for proper incorporation of the C subunit into the ATP synthase complex and mitochondrial respiration. In Caenorhabditis elegans, this protein is ATP synthase subunit C lysine N-methyltransferase.